The primary structure comprises 592 residues: Signal peptide peptidase-like 2B (592 aa).

Residues 1 to 25 form the signal peptide; it reads MAAAVAAALARLLAAFLLLAAQVAC. At 26 to 174 the chain is on the lumenal side; it reads EYGMVHVVSQ…APKEPVLDYN (149 aa). The PA domain occupies 71–149; the sequence is TASLLCSAAD…VALLSYKDML (79 aa). Asn97 and Asn129 each carry an N-linked (GlcNAc...) asparagine glycan. The helical transmembrane segment at 175 to 195 threads the bilayer; it reads MVIIFIMAVGTVAIGGYWAGS. The Cytoplasmic segment spans residues 196–221; that stretch reads RDVKKRYMKHKRDDGPEKQEDEAVDV. Residues 222-244 form a helical membrane-spanning segment; sequence TPVMTCVFVVMCCSMLVLLYYFY. Residues 245 to 248 lie on the Lumenal side of the membrane; it reads DLLV. The helical transmembrane segment at 249-271 threads the bilayer; sequence YVVIGIFCLASATGLYSCLAPCV. Residues 272–293 are Cytoplasmic-facing; that stretch reads RRLPFGKCRIPNNSLPYFHKRP. The helical transmembrane segment at 294-314 threads the bilayer; that stretch reads QARMLLLALFCVAVSVVWGVF. The Lumenal portion of the chain corresponds to 315-319; the sequence is RNEDQ. The chain crosses the membrane as a helical span at residues 320 to 340; it reads WAWVLQDALGIAFCLYMLKTI. The Cytoplasmic portion of the chain corresponds to 341-348; sequence RLPTFKAC. Residues 349 to 369 form a helical membrane-spanning segment; that stretch reads TLLLLVLFLYDIFFVFITPFL. The active site involves Asp359. Residues 370 to 412 lie on the Lumenal side of the membrane; sequence TKSGSSIMVEVATGPSDSATREKLPMVLKVPRLNSSPLALCDR. Residues 413–433 form a helical membrane-spanning segment; it reads PFSLLGFGDILVPGLLVAYCH. Residue Asp421 is part of the active site. At 434-445 the chain is on the cytoplasmic side; the sequence is RFDIQVQSSRVY. Residues 446–466 traverse the membrane as a helical segment; it reads FVACTIAYGVGLLVTFVALAL. Residues 467–470 lie on the Lumenal side of the membrane; that stretch reads MQRG. Residues 471-491 form a helical membrane-spanning segment; that stretch reads QPALLYLVPCTLVTSCAVALW. Residues 472-474 carry the PAL motif; that stretch reads PAL. At 492 to 592 the chain is on the cytoplasmic side; that stretch reads RRELGVFWTG…SPVTQPGASA (101 aa). Residues 512–524 show a composition bias toward pro residues; that stretch reads PWAPAPADGPQPP. Residues 512 to 592 form a disordered region; sequence PWAPAPADGP…SPVTQPGASA (81 aa). A compositionally biased stretch (polar residues) spans 580-592; the sequence is AQPSPVTQPGASA.

This sequence belongs to the peptidase A22B family. Monomer. Homodimer. Interacts with ITM2B. Interacts with TNF. Interacts with the simian foamy virus envelope glycoprotein gp130 and its processed leader peptide gp18LP; preferentially interacts with the leader peptide gp18LP. Glycosylated. In terms of tissue distribution, expressed predominantly in adrenal cortex and mammary gland.

Its subcellular location is the cell membrane. It is found in the golgi apparatus membrane. The protein resides in the lysosome membrane. The protein localises to the endosome membrane. It localises to the membrane. In terms of biological role, intramembrane-cleaving aspartic protease (I-CLiP) that cleaves type II membrane signal peptides in the hydrophobic plane of the membrane. Functions in ITM2B and TNF processing. Catalyzes the intramembrane cleavage of the anchored fragment of shed TNF-alpha (TNF), which promotes the release of the intracellular domain (ICD) for signaling to the nucleus. May play a role in the regulation of innate and adaptive immunity. Catalyzes the intramembrane cleavage of the simian foamy virus processed leader peptide gp18 of the envelope glycoprotein gp130 dependently of prior ectodomain shedding by furin or furin-like proprotein convertase (PC)-mediated cleavage proteolysis. The protein is Signal peptide peptidase-like 2B of Homo sapiens (Human).